The sequence spans 476 residues: Ribulose bisphosphate carboxylase large chain (476 aa).

The propeptide occupies 1–2 (MS). At Pro3 the chain carries N-acetylproline. Lys14 is modified (N6,N6,N6-trimethyllysine). Substrate is bound by residues Asn123 and Thr173. Lys175 (proton acceptor) is an active-site residue. Lys177 is a substrate binding site. Mg(2+) contacts are provided by Lys201, Asp203, and Glu204. N6-carboxylysine is present on Lys201. His294 acts as the Proton acceptor in catalysis. Substrate contacts are provided by Arg295, His327, and Ser379.

Belongs to the RuBisCO large chain family. Type I subfamily. As to quaternary structure, heterohexadecamer of 8 large chains and 8 small chains; disulfide-linked. The disulfide link is formed within the large subunit homodimers. Requires Mg(2+) as cofactor. In terms of processing, the disulfide bond which can form in the large chain dimeric partners within the hexadecamer appears to be associated with oxidative stress and protein turnover.

It is found in the plastid. It localises to the chloroplast. The catalysed reaction is 2 (2R)-3-phosphoglycerate + 2 H(+) = D-ribulose 1,5-bisphosphate + CO2 + H2O. The enzyme catalyses D-ribulose 1,5-bisphosphate + O2 = 2-phosphoglycolate + (2R)-3-phosphoglycerate + 2 H(+). In terms of biological role, ruBisCO catalyzes two reactions: the carboxylation of D-ribulose 1,5-bisphosphate, the primary event in carbon dioxide fixation, as well as the oxidative fragmentation of the pentose substrate in the photorespiration process. Both reactions occur simultaneously and in competition at the same active site. This chain is Ribulose bisphosphate carboxylase large chain, found in Phaseolus vulgaris (Kidney bean).